Reading from the N-terminus, the 948-residue chain is P cell-type agglutination protein map4 (948 aa).

Residues 1 to 23 (MNSYAILLSLFFSFERLLTLANA) form the signal peptide. Residues N31, N32, and N57 are each glycosylated (N-linked (GlcNAc...) asparagine). 2 disordered regions span residues 136–174 (IPRG…IGTG) and 253–333 (FYET…PTTY). Low complexity predominate over residues 149–174 (PTYSASDSSATTITSSSPSTSIIGTG). Positions 253–264 (FYETKSSTSSVP) are enriched in polar residues. Residues 265 to 332 (TQTIDSSSFT…PSLSSALPTT (68 aa)) are compositionally biased toward low complexity. Residue N383 is glycosylated (N-linked (GlcNAc...) asparagine). The segment at 408–432 (LTSSTKKIPSTTLPTSSKMITTTTP) is disordered. N-linked (GlcNAc...) asparagine glycans are attached at residues N436, N469, N491, N522, N553, N568, and N598. Tandem repeats lie at residues 617-652 (SYVT…IPTP), 653-688 (SWVT…IPTP), 689-724 (SWVT…IPTP), 725-760 (SWVT…IPTP), and 761-796 (SWVT…VPTP). The tract at residues 617 to 796 (SYVTETTTSG…GTVLIDVPTP (180 aa)) is 5 X 36 AA approximate tandem repeats. Residues 796–948 (PTASSSPFPS…ANVVLRALEY (153 aa)) enclose the DIPSY domain. An N-linked (GlcNAc...) asparagine glycan is attached at N921.

This sequence belongs to the mam3/map4 family.

The protein resides in the cell surface. P cell-type specific protein which involved in agglutination during conjugation. The chain is P cell-type agglutination protein map4 from Schizosaccharomyces pombe (strain 972 / ATCC 24843) (Fission yeast).